The following is a 191-amino-acid chain: Molybdenum cofactor guanylyltransferase (191 aa).

GTP is bound by residues 13–15, lysine 26, aspartate 72, and aspartate 102; that span reads LAG. Aspartate 102 contacts Mg(2+).

Belongs to the MobA family. Monomer. It depends on Mg(2+) as a cofactor.

The protein localises to the cytoplasm. It carries out the reaction Mo-molybdopterin + GTP + H(+) = Mo-molybdopterin guanine dinucleotide + diphosphate. In terms of biological role, transfers a GMP moiety from GTP to Mo-molybdopterin (Mo-MPT) cofactor (Moco or molybdenum cofactor) to form Mo-molybdopterin guanine dinucleotide (Mo-MGD) cofactor. The protein is Molybdenum cofactor guanylyltransferase of Pseudomonas putida (Arthrobacter siderocapsulatus).